A 212-amino-acid polypeptide reads, in one-letter code: Floral homeotic protein PMADS 2 (212 aa).

The region spanning 3–58 (RGKIEIKRIENSSNRQVTYSKRRNGIIKKAKEITVLCDAKVSLIIFGNSGKMHEYC) is the MADS-box domain. Residues 84–170 (HENLSNEIDR…QYALHQKEMA (87 aa)) form the K-box domain.

In terms of tissue distribution, predominantly expressed in petals and stamens, less in carpels and sepals.

The protein resides in the nucleus. Transcription factor involved in the genetic control of flower development. The chain is Floral homeotic protein PMADS 2 (PMADS2) from Petunia hybrida (Petunia).